The sequence spans 263 residues: ATP synthase subunit b 2 (263 aa).

Residues 2-22 (LIDPLTVVAQIINFLILVALL) traverse the membrane as a helical segment.

It belongs to the ATPase B chain family. F-type ATPases have 2 components, F(1) - the catalytic core - and F(0) - the membrane proton channel. F(1) has five subunits: alpha(3), beta(3), gamma(1), delta(1), epsilon(1). F(0) has four main subunits: a(1), b(1), b'(1) and c(10-14). The alpha and beta chains form an alternating ring which encloses part of the gamma chain. F(1) is attached to F(0) by a central stalk formed by the gamma and epsilon chains, while a peripheral stalk is formed by the delta, b and b' chains.

It localises to the cellular thylakoid membrane. Functionally, f(1)F(0) ATP synthase produces ATP from ADP in the presence of a proton or sodium gradient. F-type ATPases consist of two structural domains, F(1) containing the extramembraneous catalytic core and F(0) containing the membrane proton channel, linked together by a central stalk and a peripheral stalk. During catalysis, ATP synthesis in the catalytic domain of F(1) is coupled via a rotary mechanism of the central stalk subunits to proton translocation. Its function is as follows. Component of the F(0) channel, it forms part of the peripheral stalk, linking F(1) to F(0). The chain is ATP synthase subunit b 2 from Acaryochloris marina (strain MBIC 11017).